The chain runs to 1154 residues: DNA-directed RNA polymerase subunit beta (1154 aa).

Basic and acidic residues predominate over residues 1108-1123 (ELGIDIQGEDRSERAG). Residues 1108-1136 (ELGIDIQGEDRSERAGEPASPDEMDDEEE) are disordered. A compositionally biased stretch (acidic residues) spans 1127-1136 (SPDEMDDEEE).

The protein belongs to the RNA polymerase beta chain family. In terms of assembly, the RNAP catalytic core consists of 2 alpha, 1 beta, 1 beta' and 1 omega subunit. When a sigma factor is associated with the core the holoenzyme is formed, which can initiate transcription.

It carries out the reaction RNA(n) + a ribonucleoside 5'-triphosphate = RNA(n+1) + diphosphate. In terms of biological role, DNA-dependent RNA polymerase catalyzes the transcription of DNA into RNA using the four ribonucleoside triphosphates as substrates. The sequence is that of DNA-directed RNA polymerase subunit beta from Heliobacterium modesticaldum (strain ATCC 51547 / Ice1).